Reading from the N-terminus, the 304-residue chain is E3 ubiquitin-protein ligase RNF144B (304 aa).

A TRIAD supradomain region spans residues 27–245 (PLVTCKLCLC…YDRGPCRNKL (219 aa)). Residues C31, C34, C54, C57, C122, C127, C146, C149, C154, C157, H162, C167, C194, and C197 each coordinate Zn(2+). The RING-type 1 zinc finger occupies 31-81 (CKLCLCEQSLDKMTTLQECRCIFCTACLKQYMQLAIREGCGSPITCPDMVC). An IBR-type zinc finger spans residues 102–167 (QLYQRLKFER…KDAWHAEVSC (66 aa)). The segment at 194–223 (CPVCRVYIERNEGCAQMMCKNCKHTFCWYC) adopts an RING-type 2; atypical zinc-finger fold. C207 is an active-site residue. 6 residues coordinate Zn(2+): C212, C215, C220, C223, H235, and C241. Residues 259–279 (VVGILVGLGIIALVTSPLLLL) form a helical membrane-spanning segment.

It belongs to the RBR family. RNF144 subfamily. Interacts with UBE2L3, UBE2L6 and LCMT2, as well as with BAX. Interacts with TBK1; this interaction inhibits TBK1 phosphorylation and 'Lys-63'-linked polyubiquitination. In terms of processing, auto-ubiquitinated.

It is found in the mitochondrion membrane. The protein resides in the cytoplasm. It carries out the reaction [E2 ubiquitin-conjugating enzyme]-S-ubiquitinyl-L-cysteine + [acceptor protein]-L-lysine = [E2 ubiquitin-conjugating enzyme]-L-cysteine + [acceptor protein]-N(6)-ubiquitinyl-L-lysine.. The protein operates within protein modification; protein ubiquitination. E3 ubiquitin-protein ligase which accepts ubiquitin from E2 ubiquitin-conjugating enzymes UBE2L3 and UBE2L6 in the form of a thioester and then directly transfers the ubiquitin to targeted substrates such as LCMT2, thereby promoting their degradation. Induces apoptosis via a p53/TP53-dependent but caspase-independent mechanism. Plays a crucial role in maintaining the genomic stability by controlling the degradation of multiple proteins involved in mitotic progression and DNA damage. Regulates epithelial homeostasis by mediating degradation of CDKN1A and isoform 2 of TP63. Plays a regulatory role in innate immunity by negatively regulating IRF3 activation and IFN-beta production. Mechanistically, inhibits TBK1 phosphorylation and 'Lys-63'-linked polyubiquitination independently of its E3 ligase activity. Alternatively, promotes 'Lys-27' and 'Lys-33'-linked ubiquitination of IFIH1/MDA5, promoting selective autophagic degradation of IFIH1/MDA5 to inhibit antiviral response. The protein is E3 ubiquitin-protein ligase RNF144B (RNF144B) of Bos taurus (Bovine).